The sequence spans 203 residues: Pyridoxal 5'-phosphate synthase subunit PdxT (203 aa).

51–53 (GES) lines the L-glutamine pocket. The Nucleophile role is filled by C83. L-glutamine contacts are provided by residues R110 and 137–138 (IR). Catalysis depends on charge relay system residues H172 and E174.

Belongs to the glutaminase PdxT/SNO family. In terms of assembly, in the presence of PdxS, forms a dodecamer of heterodimers. Only shows activity in the heterodimer.

It catalyses the reaction aldehydo-D-ribose 5-phosphate + D-glyceraldehyde 3-phosphate + L-glutamine = pyridoxal 5'-phosphate + L-glutamate + phosphate + 3 H2O + H(+). The catalysed reaction is L-glutamine + H2O = L-glutamate + NH4(+). It functions in the pathway cofactor biosynthesis; pyridoxal 5'-phosphate biosynthesis. Its function is as follows. Catalyzes the hydrolysis of glutamine to glutamate and ammonia as part of the biosynthesis of pyridoxal 5'-phosphate. The resulting ammonia molecule is channeled to the active site of PdxS. This chain is Pyridoxal 5'-phosphate synthase subunit PdxT, found in Thermoplasma acidophilum (strain ATCC 25905 / DSM 1728 / JCM 9062 / NBRC 15155 / AMRC-C165).